The primary structure comprises 145 residues: Putative phosphatidylglycerol/phosphatidylinositol transfer protein DDB_G0282179 (145 aa).

A signal peptide spans 1–20 (MIKTILLLLINFMLILIVNG). A glycan (N-linked (GlcNAc...) asparagine) is linked at asparagine 134.

Belongs to the NPC2 family. Monomer.

Functionally, catalyzes the intermembrane transfer of phosphatidylglycerol and phosphatidylinositol. The sequence is that of Putative phosphatidylglycerol/phosphatidylinositol transfer protein DDB_G0282179 from Dictyostelium discoideum (Social amoeba).